Here is a 300-residue protein sequence, read N- to C-terminus: 5'-adenylylsulfate reductase-like 5 (300 aa).

The signal sequence occupies residues 1–23 (MDSRVSILFVCAIAVSCFTSGSA). The 121-residue stretch at 41-161 (FDLEAKCPPS…LIEFYEEATG (121 aa)) folds into the Thioredoxin domain. N-linked (GlcNAc...) asparagine glycosylation occurs at Asn-136. A helical membrane pass occupies residues 202–222 (FLVLSLLFICLQMAILVFPIA).

It localises to the membrane. This is 5'-adenylylsulfate reductase-like 5 (APRL5) from Arabidopsis thaliana (Mouse-ear cress).